A 138-amino-acid polypeptide reads, in one-letter code: Large ribosomal subunit protein uL16 (138 aa).

The span at 1–13 (MLQPKRRKYRKEQ) shows a compositional bias: basic residues. Residues 1 to 24 (MLQPKRRKYRKEQKGRNTGKATRG) form a disordered region.

It belongs to the universal ribosomal protein uL16 family. In terms of assembly, part of the 50S ribosomal subunit.

Binds 23S rRNA and is also seen to make contacts with the A and possibly P site tRNAs. The protein is Large ribosomal subunit protein uL16 of Burkholderia multivorans (strain ATCC 17616 / 249).